We begin with the raw amino-acid sequence, 270 residues long: Cbp/p300-interacting transactivator 2 (270 aa).

Positions 138–201 (LHPAAGHQMN…SGGGSGSGNM (64 aa)) are disordered. A compositionally biased stretch (gly residues) spans 165–198 (STPGGSGGSSTPGGSGSSSGGGAGSSNSGGGSGS).

It belongs to the CITED family. As to quaternary structure, interacts (via C-terminus) with SMAD2. Interacts (via C-terminus) with SMAD3 (via MH2 domain). Interacts with LHX2 (via LIM domains). Interacts with WT1. Interacts (via C-terminus) with EP300 (via CH1 domain); the interaction is stimulated in response to hypoxia. Interacts with PPARA. Interacts (via C-terminus) with TFAP2A, TFAP2B and TFAP2C.

The protein localises to the nucleus. In terms of biological role, transcriptional coactivator of the p300/CBP-mediated transcription complex. Acts as a bridge, linking TFAP2 transcription factors and the p300/CBP transcriptional coactivator complex in order to stimulate TFAP2-mediated transcriptional activation. Positively regulates TGF-beta signaling through its association with the SMAD/p300/CBP-mediated transcriptional coactivator complex. Stimulates the peroxisome proliferator-activated receptors PPARA transcriptional activity. Enhances estrogen-dependent transactivation mediated by estrogen receptors. Also acts as a transcriptional corepressor; interferes with the binding of the transcription factors HIF1A or STAT2 and the p300/CBP transcriptional coactivator complex. Participates in sex determination and early gonad development by stimulating transcription activation of SRY. Plays a role in controlling left-right patterning during embryogenesis; potentiates transcriptional activation of NODAL-mediated gene transcription in the left lateral plate mesoderm (LPM). Plays an essential role in differentiation of the adrenal cortex from the adrenogonadal primordium (AGP); stimulates WT1-mediated transcription activation thereby up-regulating the nuclear hormone receptor NR5A1 promoter activity. Associates with chromatin to the PITX2 P1 promoter region. This chain is Cbp/p300-interacting transactivator 2 (CITED2), found in Homo sapiens (Human).